A 120-amino-acid chain; its full sequence is Large ribosomal subunit protein uL18 (120 aa).

This sequence belongs to the universal ribosomal protein uL18 family. Part of the 50S ribosomal subunit; part of the 5S rRNA/L5/L18 subcomplex. In B.stearothermophilus only 2 proteins, L5 and L18 have been shown to be part of this subcomplex, unlike the case in E.coli and T.thermophilus where L25 (TL5) is also found. In terms of processing, the protein, when overexpressed in E.coli, contains a phosphoserine, which is required for the protein to bind to 5S rRNA. It has been suggested, based solely on amino acid conservation, that this occurs on Ser-57.

In terms of biological role, this is one of the proteins that bind and probably mediate the attachment of the 5S RNA into the large ribosomal subunit, where it forms part of the central protuberance. The chain is Large ribosomal subunit protein uL18 (rplR) from Geobacillus stearothermophilus (Bacillus stearothermophilus).